Here is a 247-residue protein sequence, read N- to C-terminus: Chymase (247 aa).

The first 19 residues, 1–19, serve as a signal peptide directing secretion; sequence MLLLPLPLLLFFLCSRAEA. Residues 20-21 constitute a propeptide, activation peptide; it reads GE. The region spanning 22–245 is the Peptidase S1 domain; it reads IIGGTECKPH…YRPWINKILQ (224 aa). Cys51 and Cys67 are joined by a disulfide. His66 serves as the catalytic Charge relay system. N-linked (GlcNAc...) asparagine glycosylation is found at Asn80 and Asn103. Asp110 acts as the Charge relay system in catalysis. Intrachain disulfides connect Cys144–Cys209 and Cys175–Cys188. The Charge relay system role is filled by Ser203.

This sequence belongs to the peptidase S1 family. Granzyme subfamily.

It localises to the secreted. The protein resides in the cytoplasmic granule. It catalyses the reaction Preferential cleavage: Phe-|-Xaa &gt; Tyr-|-Xaa &gt; Trp-|-Xaa &gt; Leu-|-Xaa.. Major secreted protease of mast cells with suspected roles in vasoactive peptide generation, extracellular matrix degradation, and regulation of gland secretion. This is Chymase (CMA1) from Macaca fascicularis (Crab-eating macaque).